Reading from the N-terminus, the 321-residue chain is XylDLEGF operon transcriptional activator 1 (321 aa).

Positions 214 to 315 constitute an HTH araC/xylS-type domain; sequence ERVVQFIEEN…GELPSDTLRQ (102 aa). DNA-binding regions (H-T-H motif) lie at residues 231 to 252 and 282 to 305; these read ERLA…EKHA and ITEI…RSAF.

Its subcellular location is the cytoplasm. Its function is as follows. Regulatory protein of the TOL plasmid xyl operons. XylS activates the xylXYZLTEGFJQKIH operon required for the degradation of toluene, m-xylene and p-xylene. The chain is XylDLEGF operon transcriptional activator 1 (xylS1) from Pseudomonas putida (Arthrobacter siderocapsulatus).